A 293-amino-acid polypeptide reads, in one-letter code: PHD finger protein 11A (293 aa).

The C2HC pre-PHD-type zinc-finger motif lies at 25–61 (KRTCALCPEGHEWSQIYFSPSANIVAHENCLLYSSGL). The segment at 91 to 143 (LKCSFCKNKGATMGYDLQSCTKNYHLSCAMEDHAILQVDEDHGTYKLFCQKHA) adopts a PHD-type; degenerate zinc-finger fold. The tract at residues 262–293 (SSSTSGSLLPPEDHQVRCQESPEVQAGSGDSL) is disordered.

The protein resides in the nucleus. This Mus musculus (Mouse) protein is PHD finger protein 11A (Phf11a).